The following is a 424-amino-acid chain: Zinc finger and BTB domain-containing protein 6 (424 aa).

Residues 33–97 (CDVSIYINDT…CYTGALEVKR (65 aa)) form the BTB domain. Residue serine 202 is modified to Phosphoserine. 4 consecutive C2H2-type zinc fingers follow at residues 301-323 (HQCP…LKMH), 326-348 (FLCL…IRGH), 354-376 (FQCT…LNIH), and 382-405 (YKCH…TSLH). The disordered stretch occupies residues 403–424 (SLHGRSSGEKLPRHDLERQNLL). The span at 408 to 424 (SSGEKLPRHDLERQNLL) shows a compositional bias: basic and acidic residues.

The protein resides in the nucleus. In terms of biological role, may be involved in transcriptional regulation. In Bos taurus (Bovine), this protein is Zinc finger and BTB domain-containing protein 6 (ZBTB6).